Reading from the N-terminus, the 208-residue chain is Large ribosomal subunit protein uL3 (208 aa).

Position 149 is an N5-methylglutamine (Gln-149).

The protein belongs to the universal ribosomal protein uL3 family. As to quaternary structure, part of the 50S ribosomal subunit. Forms a cluster with proteins L14 and L19. Methylated by PrmB.

One of the primary rRNA binding proteins, it binds directly near the 3'-end of the 23S rRNA, where it nucleates assembly of the 50S subunit. The chain is Large ribosomal subunit protein uL3 from Haemophilus influenzae (strain PittGG).